Here is a 431-residue protein sequence, read N- to C-terminus: Tyrosine--tRNA ligase (431 aa).

Tyr-33 lines the L-tyrosine pocket. A 'HIGH' region motif is present at residues 38–47; sequence PTADSLHIGS. Residues Tyr-172 and Gln-176 each contribute to the L-tyrosine site. Positions 234–238 match the 'KMSKS' region motif; that stretch reads KFGKS. Lys-237 contacts ATP. One can recognise an S4 RNA-binding domain in the interval 364–431; that stretch reads INIVEVLNEK…KKNYFVLNVK (68 aa).

The protein belongs to the class-I aminoacyl-tRNA synthetase family. TyrS type 1 subfamily. As to quaternary structure, homodimer.

Its subcellular location is the cytoplasm. The catalysed reaction is tRNA(Tyr) + L-tyrosine + ATP = L-tyrosyl-tRNA(Tyr) + AMP + diphosphate + H(+). In terms of biological role, catalyzes the attachment of tyrosine to tRNA(Tyr) in a two-step reaction: tyrosine is first activated by ATP to form Tyr-AMP and then transferred to the acceptor end of tRNA(Tyr). This chain is Tyrosine--tRNA ligase, found in Flavobacterium psychrophilum (strain ATCC 49511 / DSM 21280 / CIP 103535 / JIP02/86).